The primary structure comprises 32 residues: Calcitonin-2 (32 aa).

Cys-1 and Cys-7 are oxidised to a cystine. The residue at position 32 (Pro-32) is a Proline amide.

The protein belongs to the calcitonin family.

The protein localises to the secreted. Its function is as follows. Causes a rapid but short-lived drop in the level of calcium and phosphate in blood by promoting the incorporation of those ions in the bones. This is Calcitonin-2 from Oncorhynchus gorbuscha (Pink salmon).